We begin with the raw amino-acid sequence, 204 residues long: MRYPNLLFLALPISEHYIEESLKYFKLTSNDPMILSGFRGPRVSHLTIGMIPVKNDEDVLKCMDFLYNKEDEIRKSYGEKKITIDLKGTSFFGKSPQEAKVLYATPVDKHNEWLKVIFTEHNLFTKDARPLTLHCTLLNSRYIKYQGRRIRFFNSEPFMEKYGQFLWAHNIELDKLSIMKTGAVGEPGNMYYEELASIPLLVND.

The protein resides in the cytoplasm. The protein localises to the nucleus. This is an uncharacterized protein from Schizosaccharomyces pombe (strain 972 / ATCC 24843) (Fission yeast).